A 1012-amino-acid chain; its full sequence is Multiple C2 domain and transmembrane region protein 10 (1012 aa).

Positions 1-115 constitute a C2 1 domain; that stretch reads MTEAKTGTGN…REGESVVQLY (115 aa). Positions 141–203 are disordered; it reads ENGENVRRVN…SQQNGQGQRM (63 aa). Positions 148–160 are enriched in basic residues; the sequence is RVNRSGGSKKSKK. 2 stretches are compositionally biased toward low complexity: residues 161-180 and 188-202; these read VQNV…QQQQ and RGNQ…QGQR. 3 C2 domains span residues 262–376, 411–551, and 585–710; these read SSHK…PQWY, KAGN…SRWF, and YNSD…THSY. Ca(2+) contacts are provided by E296, E344, N346, and E349. Transmembrane regions (helical) follow at residues 810 to 830, 841 to 861, and 952 to 972; these read FFRL…VEVM, VFVL…PCLL, and ATFL…TVPV.

The protein belongs to the MCTP family. It depends on Ca(2+) as a cofactor. In terms of tissue distribution, highly expressed in roots meristems, shoot apical meristems (SAMs) and in incipient leaf primordia. Observed in flowers.

The protein resides in the endoplasmic reticulum membrane. In terms of biological role, may function as a signaling molecule by regulating the trafficking of other regulators. The sequence is that of Multiple C2 domain and transmembrane region protein 10 from Arabidopsis thaliana (Mouse-ear cress).